The sequence spans 339 residues: Heat-inducible transcription repressor HrcA (339 aa).

This sequence belongs to the HrcA family.

In terms of biological role, negative regulator of class I heat shock genes (grpE-dnaK-dnaJ and groELS operons). Prevents heat-shock induction of these operons. The sequence is that of Heat-inducible transcription repressor HrcA from Frankia casuarinae (strain DSM 45818 / CECT 9043 / HFP020203 / CcI3).